The chain runs to 383 residues: 1-deoxy-D-xylulose 5-phosphate reductoisomerase (383 aa).

Residues threonine 10, glycine 11, serine 12, isoleucine 13, glycine 36, lysine 37, asparagine 38, and asparagine 122 each coordinate NADPH. Lysine 123 contacts 1-deoxy-D-xylulose 5-phosphate. Glutamate 124 contributes to the NADPH binding site. Aspartate 148 provides a ligand contact to Mn(2+). Serine 149, glutamate 150, serine 174, and histidine 197 together coordinate 1-deoxy-D-xylulose 5-phosphate. Glutamate 150 lines the Mn(2+) pocket. An NADPH-binding site is contributed by glycine 203. 1-deoxy-D-xylulose 5-phosphate contacts are provided by serine 210, asparagine 215, lysine 216, and glutamate 219. Glutamate 219 is a Mn(2+) binding site.

The protein belongs to the DXR family. The cofactor is Mg(2+). Mn(2+) serves as cofactor.

The enzyme catalyses 2-C-methyl-D-erythritol 4-phosphate + NADP(+) = 1-deoxy-D-xylulose 5-phosphate + NADPH + H(+). It functions in the pathway isoprenoid biosynthesis; isopentenyl diphosphate biosynthesis via DXP pathway; isopentenyl diphosphate from 1-deoxy-D-xylulose 5-phosphate: step 1/6. Functionally, catalyzes the NADPH-dependent rearrangement and reduction of 1-deoxy-D-xylulose-5-phosphate (DXP) to 2-C-methyl-D-erythritol 4-phosphate (MEP). This is 1-deoxy-D-xylulose 5-phosphate reductoisomerase from Bacillus licheniformis (strain ATCC 14580 / DSM 13 / JCM 2505 / CCUG 7422 / NBRC 12200 / NCIMB 9375 / NCTC 10341 / NRRL NRS-1264 / Gibson 46).